A 217-amino-acid polypeptide reads, in one-letter code: Probable GTP-binding protein EngB (217 aa).

The EngB-type G domain occupies 24 to 207 (SQPEICFAGR…HELIESWLIP (184 aa)). GTP contacts are provided by residues 32-39 (GRSNAGKS), 59-63 (GRTQH), 81-84 (DLPG), 148-151 (TKCD), and 185-188 (LFSA). Positions 39 and 61 each coordinate Mg(2+).

Belongs to the TRAFAC class TrmE-Era-EngA-EngB-Septin-like GTPase superfamily. EngB GTPase family. It depends on Mg(2+) as a cofactor.

Its function is as follows. Necessary for normal cell division and for the maintenance of normal septation. In Paraburkholderia phytofirmans (strain DSM 17436 / LMG 22146 / PsJN) (Burkholderia phytofirmans), this protein is Probable GTP-binding protein EngB.